The following is a 249-amino-acid chain: Transmembrane protein 106C (249 aa).

Residues 1–26 are disordered; that stretch reads MGSRHSTYAHRPFSKRRKADDTEDSL. G2 is lipidated: N-myristoyl glycine. 2 consecutive transmembrane segments (helical) span residues 86 to 106 and 197 to 217; these read YVLLSILLCLLASGLVVFFLF and SYVYFFCTLPYIGVHNVVVFV.

Belongs to the TMEM106 family. Interacts with TMEM106B.

The protein resides in the endoplasmic reticulum membrane. It is found in the membrane. The polypeptide is Transmembrane protein 106C (TMEM106C) (Bos taurus (Bovine)).